A 49-amino-acid chain; its full sequence is Peridinin-chlorophyll a-binding protein (49 aa).

As to quaternary structure, monomer. Binds 12 peridinin and 2 chlorophyll a molecules per monomer.

The protein localises to the plastid. It localises to the chloroplast. Functionally, water-soluble antenna for capture of solar energy in the blue-green range. Peridinin is an asymmetric carotenoid. The chain is Peridinin-chlorophyll a-binding protein from Alexandrium cohorticula (Dinoflagellate).